Reading from the N-terminus, the 210-residue chain is Glutathione S-transferase P 2 (210 aa).

The GST N-terminal domain occupies 1–82; that stretch reads SGYTLTYFPL…LLARYGLSGS (82 aa). Glutathione contacts are provided by residues Tyr-7, Arg-13, Trp-38, Lys-46, 53–54, and 66–67; these read QI and QS. Residues 83 to 204 enclose the GST C-terminal domain; the sequence is NEREIAINEM…KSEGRKRRPI (122 aa).

It belongs to the GST superfamily. Pi family. In terms of assembly, homodimer. As to expression, liver, kidney, muscle, skin, lung and ovary.

It catalyses the reaction RX + glutathione = an S-substituted glutathione + a halide anion + H(+). Its function is as follows. Conjugation of reduced glutathione to a wide number of exogenous and endogenous hydrophobic electrophiles. The chain is Glutathione S-transferase P 2 from Bufo bufo (European toad).